Reading from the N-terminus, the 96-residue chain is Large ribosomal subunit protein bL28 (96 aa).

The tract at residues 1-22 (MSRRCELTGKGPMTGNNVSHAN) is disordered.

This sequence belongs to the bacterial ribosomal protein bL28 family.

The protein is Large ribosomal subunit protein bL28 of Ruegeria sp. (strain TM1040) (Silicibacter sp.).